The chain runs to 462 residues: Cysteine--tRNA ligase (462 aa).

Cys-28 is a binding site for Zn(2+). A 'HIGH' region motif is present at residues 30-40; the sequence is ITVYDLCHIGH. Cys-210, His-235, and Glu-239 together coordinate Zn(2+). A 'KMSKS' region motif is present at residues 267-271; sequence KMSKS. Position 270 (Lys-270) interacts with ATP.

Belongs to the class-I aminoacyl-tRNA synthetase family. Monomer. Zn(2+) serves as cofactor.

Its subcellular location is the cytoplasm. It carries out the reaction tRNA(Cys) + L-cysteine + ATP = L-cysteinyl-tRNA(Cys) + AMP + diphosphate. This is Cysteine--tRNA ligase from Erwinia tasmaniensis (strain DSM 17950 / CFBP 7177 / CIP 109463 / NCPPB 4357 / Et1/99).